The sequence spans 168 residues: uncharacterized protein (168 aa).

5 helical membrane passes run 15–33, 41–57, 73–93, 108–128, and 129–149; these read YLTV…LAVL, LSLT…ASSL, WIGL…GALL, VPLL…WVLN, and NLIA…VLAI.

The protein localises to the cell membrane. This is an uncharacterized protein from Haemophilus influenzae (strain ATCC 51907 / DSM 11121 / KW20 / Rd).